Here is a 1186-residue protein sequence, read N- to C-terminus: Probable inactive serine/threonine-protein kinase DDB_G0293184 (1186 aa).

The segment covering 1-12 (MEQEDQQYEEDS) has biased composition (acidic residues). 2 disordered regions span residues 1–55 (MEQE…NNDS) and 99–122 (MEQQ…NTNF). Low complexity-rich tracts occupy residues 34-48 (TTTE…TTPT) and 99-110 (MEQQQQQQHLQP). In terms of domain architecture, Protein kinase spans 173-437 (YESPPTLGKY…VHDLLRHPWL (265 aa)). ATP is bound by residues 179-187 (LGKYDKVIL) and Lys205. Disordered regions lie at residues 447–468 (SSSS…GNVN) and 530–551 (YNNY…NECG). Over residues 453–468 (QAHPTVQSNNLNGNVN) the composition is skewed to polar residues. Positions 530–545 (YNNYNNNNNNNNNTND) are enriched in low complexity. Residues 631–659 (LKRTNQMANDLGRKYEILQSNIKRLEDYL) are a coiled coil. A compositionally biased stretch (polar residues) spans 766 to 784 (NNLDPSNNNESVNLSTSPG). Disordered regions lie at residues 766-911 (NNLD…NGNN) and 959-988 (ENKK…GDVS). Residues 785 to 836 (SLVNSNSNPSISNSLNNNNNNNNNNNNNNNGNPNVIITTNNNCNSNSNGNNI) show a composition bias toward low complexity. Residues 847-896 (KEVKEGKEIKEIKEPKEKDKDKEKDKDKEKDKDKEKDKDKEKEKDKDKEN) show a composition bias toward basic and acidic residues. Residues 875 to 909 (EKDKDKEKDKDKEKEKDKDKENNNNNNSNNNNNNG) are a coiled coil. The segment covering 897 to 911 (NNNNNSNNNNNNGNN) has biased composition (low complexity). Residues 969–978 (LDSTNKQSPG) show a composition bias toward polar residues. A Rho-GAP domain is found at 1004–1186 (VRLDDLMTRE…LSFPKFNLSV (183 aa)).

The protein belongs to the protein kinase superfamily. STE Ser/Thr protein kinase family.

This Dictyostelium discoideum (Social amoeba) protein is Probable inactive serine/threonine-protein kinase DDB_G0293184.